Here is a 159-residue protein sequence, read N- to C-terminus: Cyclic pyranopterin monophosphate synthase (159 aa).

Substrate-binding positions include 75–77 (LCH) and 113–114 (ME). D128 is a catalytic residue.

It belongs to the MoaC family. As to quaternary structure, homohexamer; trimer of dimers.

The catalysed reaction is (8S)-3',8-cyclo-7,8-dihydroguanosine 5'-triphosphate = cyclic pyranopterin phosphate + diphosphate. It functions in the pathway cofactor biosynthesis; molybdopterin biosynthesis. Its function is as follows. Catalyzes the conversion of (8S)-3',8-cyclo-7,8-dihydroguanosine 5'-triphosphate to cyclic pyranopterin monophosphate (cPMP). The chain is Cyclic pyranopterin monophosphate synthase from Yersinia pseudotuberculosis serotype IB (strain PB1/+).